Consider the following 310-residue polypeptide: AA9 family lytic polysaccharide monooxygenase A (310 aa).

An N-terminal signal peptide occupies residues 1–21; sequence MPSTKVAALSAVLALASTVAG. Cu(2+)-binding residues include His22 and His107. 2 disulfides stabilise this stretch: Cys77–Cys199 and Cys118–Cys122. N-linked (GlcNAc...) asparagine glycans are attached at residues Asn121 and Asn159. His185 provides a ligand contact to O2. Residue Tyr196 participates in Cu(2+) binding.

Belongs to the polysaccharide monooxygenase AA9 family. The cofactor is Cu(2+).

It is found in the secreted. It carries out the reaction [(1-&gt;4)-beta-D-glucosyl]n+m + reduced acceptor + O2 = 4-dehydro-beta-D-glucosyl-[(1-&gt;4)-beta-D-glucosyl]n-1 + [(1-&gt;4)-beta-D-glucosyl]m + acceptor + H2O.. Functionally, lytic polysaccharide monooxygenase (LPMO) that depolymerizes crystalline and amorphous polysaccharides via the oxidation of scissile alpha- or beta-(1-4)-glycosidic bonds, yielding C1, C4 as well as C6 oxidation products. Catalysis by LPMOs requires the reduction of the active-site copper from Cu(II) to Cu(I) by a reducing agent and H(2)O(2) or O(2) as a cosubstrate. Active on cellulose, but not on xylan, starch, or chitin. The protein is AA9 family lytic polysaccharide monooxygenase A of Talaromyces pinophilus (Penicillium pinophilum).